Reading from the N-terminus, the 339-residue chain is UDP-N-acetylenolpyruvoylglucosamine reductase (339 aa).

The 171-residue stretch at 19–189 folds into the FAD-binding PCMH-type domain; that stretch reads VDVQARLFAQ…LRVRFKLSRE (171 aa). The active site involves Arg-166. Ser-239 functions as the Proton donor in the catalytic mechanism. Glu-335 is an active-site residue.

It belongs to the MurB family. The cofactor is FAD.

The protein localises to the cytoplasm. The enzyme catalyses UDP-N-acetyl-alpha-D-muramate + NADP(+) = UDP-N-acetyl-3-O-(1-carboxyvinyl)-alpha-D-glucosamine + NADPH + H(+). Its pathway is cell wall biogenesis; peptidoglycan biosynthesis. Its function is as follows. Cell wall formation. The chain is UDP-N-acetylenolpyruvoylglucosamine reductase from Pseudomonas syringae pv. tomato (strain ATCC BAA-871 / DC3000).